The chain runs to 316 residues: 4-hydroxy-3-methylbut-2-enyl diphosphate reductase (316 aa).

Residue Cys-12 participates in [4Fe-4S] cluster binding. (2E)-4-hydroxy-3-methylbut-2-enyl diphosphate-binding residues include His-41 and His-74. Dimethylallyl diphosphate-binding residues include His-41 and His-74. Isopentenyl diphosphate-binding residues include His-41 and His-74. [4Fe-4S] cluster is bound at residue Cys-96. His-124 provides a ligand contact to (2E)-4-hydroxy-3-methylbut-2-enyl diphosphate. His-124 is a dimethylallyl diphosphate binding site. Isopentenyl diphosphate is bound at residue His-124. The active-site Proton donor is the Glu-126. A (2E)-4-hydroxy-3-methylbut-2-enyl diphosphate-binding site is contributed by Thr-169. Cys-199 contacts [4Fe-4S] cluster. (2E)-4-hydroxy-3-methylbut-2-enyl diphosphate contacts are provided by Ser-227, Ser-228, Asn-229, and Ser-271. Residues Ser-227, Ser-228, Asn-229, and Ser-271 each coordinate dimethylallyl diphosphate. Residues Ser-227, Ser-228, Asn-229, and Ser-271 each contribute to the isopentenyl diphosphate site.

Belongs to the IspH family. [4Fe-4S] cluster is required as a cofactor.

The enzyme catalyses isopentenyl diphosphate + 2 oxidized [2Fe-2S]-[ferredoxin] + H2O = (2E)-4-hydroxy-3-methylbut-2-enyl diphosphate + 2 reduced [2Fe-2S]-[ferredoxin] + 2 H(+). It carries out the reaction dimethylallyl diphosphate + 2 oxidized [2Fe-2S]-[ferredoxin] + H2O = (2E)-4-hydroxy-3-methylbut-2-enyl diphosphate + 2 reduced [2Fe-2S]-[ferredoxin] + 2 H(+). Its pathway is isoprenoid biosynthesis; dimethylallyl diphosphate biosynthesis; dimethylallyl diphosphate from (2E)-4-hydroxy-3-methylbutenyl diphosphate: step 1/1. The protein operates within isoprenoid biosynthesis; isopentenyl diphosphate biosynthesis via DXP pathway; isopentenyl diphosphate from 1-deoxy-D-xylulose 5-phosphate: step 6/6. Functionally, catalyzes the conversion of 1-hydroxy-2-methyl-2-(E)-butenyl 4-diphosphate (HMBPP) into a mixture of isopentenyl diphosphate (IPP) and dimethylallyl diphosphate (DMAPP). Acts in the terminal step of the DOXP/MEP pathway for isoprenoid precursor biosynthesis. This chain is 4-hydroxy-3-methylbut-2-enyl diphosphate reductase, found in Xanthomonas oryzae pv. oryzae (strain MAFF 311018).